Here is a 178-residue protein sequence, read N- to C-terminus: CASP-like protein 2U3 (178 aa).

The Cytoplasmic segment spans residues 1 to 4 (MACR). A helical transmembrane segment spans residues 5–25 (VMEVLLRVLAILLSIAGALVM). Over 26–52 (AKDKQDTFVMLGTVPVPLYARHSYVEA) the chain is Extracellular. The chain crosses the membrane as a helical span at residues 53-73 (FVFLVYANGIVAIYCFIAVLL). The Cytoplasmic segment spans residues 74–80 (SLLAKSR). Residues 81–101 (VLAGLLFFMDQALAYLLLAAA) form a helical membrane-spanning segment. The Extracellular portion of the chain corresponds to 102–132 (AASTEVAYIAKRGEKKLVWGEVCSNFEHFCN). A helical membrane pass occupies residues 133–153 (LVGVSLVLTFLSVLVLVTLAI). Residues 154-178 (LSGKRLFGHPPLCAPPSTPPVHQGV) lie on the Cytoplasmic side of the membrane.

Belongs to the Casparian strip membrane proteins (CASP) family. In terms of assembly, homodimer and heterodimers.

It localises to the cell membrane. The protein is CASP-like protein 2U3 of Pteridium aquilinum subsp. aquilinum (Bracken fern).